The following is a 384-amino-acid chain: MTNSSSTSTSTTTGGSLLLLCEEEESWAGRRIPVSLLYSGLAIGGTLANGMVIYLVSSFRKLQTTSNAFIVNGCAADLSVCALWMPQEAVLGLLPAGSAEPPGDWDSGGGSYRLLRGGLLGLGLTVSLLSHCLVALNRYLLITRAPATYQVLYQRRHTAGMLALSWALALGLVLLLPPWAPKPGAEPPQVHYPALLAAGALLAQTALLLHCYLGIVRRVRVSVKRVSVLNFHLLHQLPGCAAAAAAFPAAPHAPGAGGAAHPAQPQPLPAALQPRRAQRRLSGLSVLLLCCVFLLATQPLVWVSLASGFSLPVPWGVQAASWLLCCALSALNPLLYTWRNEEFRRSVRSVLPGVGDAAAAAAAATAVPAMSQAQLGTRAAGQHW.

At 1 to 35 (MTNSSSTSTSTTTGGSLLLLCEEEESWAGRRIPVS) the chain is on the extracellular side. N-linked (GlcNAc...) asparagine glycosylation is present at N3. The helical transmembrane segment at 36–56 (LLYSGLAIGGTLANGMVIYLV) threads the bilayer. The Cytoplasmic portion of the chain corresponds to 57-73 (SSFRKLQTTSNAFIVNG). A helical transmembrane segment spans residues 74-94 (CAADLSVCALWMPQEAVLGLL). Residues 95-116 (PAGSAEPPGDWDSGGGSYRLLR) are Extracellular-facing. Residues 117 to 136 (GGLLGLGLTVSLLSHCLVAL) traverse the membrane as a helical segment. The Cytoplasmic segment spans residues 137–158 (NRYLLITRAPATYQVLYQRRHT). A helical membrane pass occupies residues 159-179 (AGMLALSWALALGLVLLLPPW). The Extracellular portion of the chain corresponds to 180–195 (APKPGAEPPQVHYPAL). A helical transmembrane segment spans residues 196 to 216 (LAAGALLAQTALLLHCYLGIV). The Cytoplasmic portion of the chain corresponds to 217–285 (RRVRVSVKRV…RAQRRLSGLS (69 aa)). The helical transmembrane segment at 286-306 (VLLLCCVFLLATQPLVWVSLA) threads the bilayer. Topologically, residues 307-310 (SGFS) are extracellular. Residues 311 to 331 (LPVPWGVQAASWLLCCALSAL) traverse the membrane as a helical segment. The Cytoplasmic portion of the chain corresponds to 332-384 (NPLLYTWRNEEFRRSVRSVLPGVGDAAAAAAAATAVPAMSQAQLGTRAAGQHW).

Belongs to the G-protein coupled receptor 1 family. As to expression, expressed predominantly in the striatum. Expressed also in olfactory tubercle, nucleus accumbens, amygdala, and neocortex. Spinal cord, pons, and medulla expression remains discrete. Also expressed in peripheral tissues, including adrenal cortex (16 dpc to 21 dpc) and cochlear ganglia (19 dpc to P3) and also at moderate levels in retina (18 dpc to 19 dpc) and spleen (21 dpc to P7).

The protein localises to the cell membrane. It is found in the cell projection. It localises to the cilium membrane. The protein resides in the cytoplasm. Its subcellular location is the nucleus. Its function is as follows. Orphan G protein-coupled receptor implicated in a large repertoire of behavioral responses that engage motor activities, spatial learning, and emotional processing. May play a role in the regulation of cognitive and motor function. Couples with the heterotrimeric G protein complex of the G(i) subfamily, consisting of GNAI1, GNB1 and GNG2, thereby acting through a G(i)-mediated pathway. Plays a role in the attenuation of D1 dopamine receptor (D1R)-mediated cAMP response in ciliated cells. In non-ciliated cells, involved in the inhibition of the beta-2 adrenergic receptor (B2AR) response. This chain is G protein-coupled receptor 88 (Gpr88), found in Rattus norvegicus (Rat).